The chain runs to 361 residues: Tyrosine--tRNA ligase (361 aa).

The L-tyrosine site is built by Tyr-36, Tyr-162, Gln-166, Asp-169, and Gln-184. The short motif at 236–240 (KMSKS) is the 'KMSKS' region element. Position 239 (Lys-239) interacts with ATP.

It belongs to the class-I aminoacyl-tRNA synthetase family. TyrS type 4 subfamily. As to quaternary structure, homodimer.

It localises to the cytoplasm. The enzyme catalyses tRNA(Tyr) + L-tyrosine + ATP = L-tyrosyl-tRNA(Tyr) + AMP + diphosphate + H(+). In terms of biological role, catalyzes the attachment of tyrosine to tRNA(Tyr) in a two-step reaction: tyrosine is first activated by ATP to form Tyr-AMP and then transferred to the acceptor end of tRNA(Tyr). This chain is Tyrosine--tRNA ligase, found in Saccharolobus islandicus (strain L.S.2.15 / Lassen #1) (Sulfolobus islandicus).